Here is a 228-residue protein sequence, read N- to C-terminus: Small ribosomal subunit protein uS3 (228 aa).

The 69-residue stretch at 39–107 (VREYLQDKLK…PVHINIEEIR (69 aa)) folds into the KH type-2 domain.

Belongs to the universal ribosomal protein uS3 family. Part of the 30S ribosomal subunit. Forms a tight complex with proteins S10 and S14.

Functionally, binds the lower part of the 30S subunit head. Binds mRNA in the 70S ribosome, positioning it for translation. The chain is Small ribosomal subunit protein uS3 from Pseudomonas syringae pv. syringae (strain B728a).